Here is a 194-residue protein sequence, read N- to C-terminus: Phosphoprotein p30 (194 aa).

It belongs to the asfivirus phosphoprotein p30 family. As to quaternary structure, oligomer. Interacts with host HNRNPK. Phosphorylated on serine residues in the 115 N-terminal amino acids.

The protein resides in the host cytoplasm. Its subcellular location is the host nucleus. The protein localises to the virion. Functionally, modifies the subcellular distribution of heterogeneous nuclear ribonucleoprotein K (HNRNPK) and may contribute to modulate HNRNPK functions related to processing and export of mRNAs during ASFV infection. Necessary for virus internalization. This chain is Phosphoprotein p30, found in Ornithodoros (relapsing fever ticks).